We begin with the raw amino-acid sequence, 294 residues long: Small ribosomal subunit protein uS2 (294 aa).

Positions 256-274 (SGKFIMDEDPDSKKTKTAE) are enriched in basic and acidic residues. A disordered region spans residues 256–294 (SGKFIMDEDPDSKKTKTAEEPSATIEPSTTTTVEVDQNE). Polar residues predominate over residues 280–294 (IEPSTTTTVEVDQNE).

Belongs to the universal ribosomal protein uS2 family.

In Leptospira interrogans serogroup Icterohaemorrhagiae serovar Lai (strain 56601), this protein is Small ribosomal subunit protein uS2.